The sequence spans 778 residues: Ral guanine nucleotide dissociation stimulator-like 2 (778 aa).

A compositionally biased stretch (low complexity) spans 1–15; it reads MLPRPLRLLLDTTPP. A disordered region spans residues 1 to 59; it reads MLPRPLRLLLDTTPPGGVVLSSFRSRDPEEGGDPGGRAVGGGQEEEDEEEEEASVSVWD. Residues 33–42 show a composition bias toward gly residues; sequence DPGGRAVGGG. Residues 43–59 are compositionally biased toward acidic residues; that stretch reads QEEEDEEEEEASVSVWD. In terms of domain architecture, N-terminal Ras-GEF spans 88-212; that stretch reads SSRRLRAGTL…GSADLIRNLR (125 aa). In terms of domain architecture, Ras-GEF spans 243–513; it reads LADHLAEQLT…HRVSCEVEPP (271 aa). 4 disordered regions span residues 503–524, 541–564, 581–647, and 735–769; these read SHRVSCEVEPPGTSDSPAARTP, GGPTPLVSWDRPSVGGDEVPGTPA, SLDS…GPGS, and RRPSAATPGSHSGPSASGTPPSEGGGGSFPRIKAT. The span at 581–592 shows a compositional bias: low complexity; sequence SLDSALESSPSL. Polar residues predominate over residues 620–632; the sequence is CGSPLSGNTGEGT. One can recognise a Ras-associating domain in the interval 649–736; that stretch reads DCRIIRVQME…HDFLLRQRRR (88 aa). The segment covering 738 to 756 has biased composition (low complexity); sequence SAATPGSHSGPSASGTPPS.

As to quaternary structure, interacts with SAMD9.

Its function is as follows. Probable guanine nucleotide exchange factor. Putative effector of Ras and/or Rap. Associates with the GTP-bound form of Rap 1A and H-Ras in vitro. The polypeptide is Ral guanine nucleotide dissociation stimulator-like 2 (Rgl2) (Mus musculus (Mouse)).